Reading from the N-terminus, the 409-residue chain is Tyrosine--tRNA ligase (409 aa).

The 'HIGH' region motif lies at 54–63 (PTAPDIHLGH). The 'KMSKS' region motif lies at 238 to 242 (KMSKS). An ATP-binding site is contributed by lysine 241. In terms of domain architecture, S4 RNA-binding spans 347 to 407 (QGILRILREA…GKRKFARVKL (61 aa)).

This sequence belongs to the class-I aminoacyl-tRNA synthetase family. TyrS type 2 subfamily. In terms of assembly, homodimer.

The protein localises to the cytoplasm. It catalyses the reaction tRNA(Tyr) + L-tyrosine + ATP = L-tyrosyl-tRNA(Tyr) + AMP + diphosphate + H(+). In terms of biological role, catalyzes the attachment of tyrosine to tRNA(Tyr) in a two-step reaction: tyrosine is first activated by ATP to form Tyr-AMP and then transferred to the acceptor end of tRNA(Tyr). The protein is Tyrosine--tRNA ligase of Bordetella parapertussis (strain 12822 / ATCC BAA-587 / NCTC 13253).